A 288-amino-acid chain; its full sequence is ATP synthase gamma chain (288 aa).

Belongs to the ATPase gamma chain family. As to quaternary structure, F-type ATPases have 2 components, CF(1) - the catalytic core - and CF(0) - the membrane proton channel. CF(1) has five subunits: alpha(3), beta(3), gamma(1), delta(1), epsilon(1). CF(0) has three main subunits: a, b and c.

It localises to the cell inner membrane. In terms of biological role, produces ATP from ADP in the presence of a proton gradient across the membrane. The gamma chain is believed to be important in regulating ATPase activity and the flow of protons through the CF(0) complex. This is ATP synthase gamma chain from Acidithiobacillus ferrooxidans (strain ATCC 23270 / DSM 14882 / CIP 104768 / NCIMB 8455) (Ferrobacillus ferrooxidans (strain ATCC 23270)).